The sequence spans 312 residues: Ribosomal RNA small subunit methyltransferase H (312 aa).

Residues 33 to 35 (GGH), Asp52, Phe81, Asp102, and Gln109 each bind S-adenosyl-L-methionine.

This sequence belongs to the methyltransferase superfamily. RsmH family.

Its subcellular location is the cytoplasm. The enzyme catalyses cytidine(1402) in 16S rRNA + S-adenosyl-L-methionine = N(4)-methylcytidine(1402) in 16S rRNA + S-adenosyl-L-homocysteine + H(+). Its function is as follows. Specifically methylates the N4 position of cytidine in position 1402 (C1402) of 16S rRNA. This Leuconostoc mesenteroides subsp. mesenteroides (strain ATCC 8293 / DSM 20343 / BCRC 11652 / CCM 1803 / JCM 6124 / NCDO 523 / NBRC 100496 / NCIMB 8023 / NCTC 12954 / NRRL B-1118 / 37Y) protein is Ribosomal RNA small subunit methyltransferase H.